Reading from the N-terminus, the 184-residue chain is UPF0215 protein MJ1150 (184 aa).

This sequence belongs to the UPF0215 family.

The polypeptide is UPF0215 protein MJ1150 (Methanocaldococcus jannaschii (strain ATCC 43067 / DSM 2661 / JAL-1 / JCM 10045 / NBRC 100440) (Methanococcus jannaschii)).